Reading from the N-terminus, the 201-residue chain is Holliday junction branch migration complex subunit RuvA (201 aa).

The domain I stretch occupies residues 1–64; sequence MIGRLRGTLA…EDAHLLYGFA (64 aa). The domain II stretch occupies residues 65-143; it reads EKRERELFRE…AWENMPTIAP (79 aa). The flexible linker stretch occupies residues 144–152; sequence LVMEPRASA. A domain III region spans residues 153 to 201; it reads TVSSAEADAVSALIALGFKPQEASRAVAAVPGEDLSSEEMIRQALKGMV.

Belongs to the RuvA family. Homotetramer. Forms an RuvA(8)-RuvB(12)-Holliday junction (HJ) complex. HJ DNA is sandwiched between 2 RuvA tetramers; dsDNA enters through RuvA and exits via RuvB. An RuvB hexamer assembles on each DNA strand where it exits the tetramer. Each RuvB hexamer is contacted by two RuvA subunits (via domain III) on 2 adjacent RuvB subunits; this complex drives branch migration. In the full resolvosome a probable DNA-RuvA(4)-RuvB(12)-RuvC(2) complex forms which resolves the HJ.

The protein localises to the cytoplasm. Its function is as follows. The RuvA-RuvB-RuvC complex processes Holliday junction (HJ) DNA during genetic recombination and DNA repair, while the RuvA-RuvB complex plays an important role in the rescue of blocked DNA replication forks via replication fork reversal (RFR). RuvA specifically binds to HJ cruciform DNA, conferring on it an open structure. The RuvB hexamer acts as an ATP-dependent pump, pulling dsDNA into and through the RuvAB complex. HJ branch migration allows RuvC to scan DNA until it finds its consensus sequence, where it cleaves and resolves the cruciform DNA. The sequence is that of Holliday junction branch migration complex subunit RuvA from Pseudomonas aeruginosa (strain LESB58).